The sequence spans 787 residues: Endonuclease MutS2 (787 aa).

Residue 334–341 (GPNTGGKT) coordinates ATP. The segment at 685–709 (KAQDPAKSAKQPRASVKRSGSSGMS) is disordered. One can recognise a Smr domain in the interval 712 to 787 (LDLRGHRYEE…GDGSTVVHFK (76 aa)).

It belongs to the DNA mismatch repair MutS family. MutS2 subfamily. In terms of assembly, homodimer. Binds to stalled ribosomes, contacting rRNA.

Endonuclease that is involved in the suppression of homologous recombination and thus may have a key role in the control of bacterial genetic diversity. In terms of biological role, acts as a ribosome collision sensor, splitting the ribosome into its 2 subunits. Detects stalled/collided 70S ribosomes which it binds and splits by an ATP-hydrolysis driven conformational change. Acts upstream of the ribosome quality control system (RQC), a ribosome-associated complex that mediates the extraction of incompletely synthesized nascent chains from stalled ribosomes and their subsequent degradation. Probably generates substrates for RQC. This is Endonuclease MutS2 from Levilactobacillus brevis (strain ATCC 367 / BCRC 12310 / CIP 105137 / JCM 1170 / LMG 11437 / NCIMB 947 / NCTC 947) (Lactobacillus brevis).